Here is a 176-residue protein sequence, read N- to C-terminus: Ribosome maturation factor RimM (176 aa).

Residues 100 to 173 (KDEYHYHDLI…WLLINPPPGL (74 aa)) form the PRC barrel domain.

Belongs to the RimM family. Binds ribosomal protein uS19.

The protein localises to the cytoplasm. Its function is as follows. An accessory protein needed during the final step in the assembly of 30S ribosomal subunit, possibly for assembly of the head region. Essential for efficient processing of 16S rRNA. May be needed both before and after RbfA during the maturation of 16S rRNA. It has affinity for free ribosomal 30S subunits but not for 70S ribosomes. The protein is Ribosome maturation factor RimM of Prochlorococcus marinus (strain NATL2A).